A 609-amino-acid polypeptide reads, in one-letter code: Forkhead box protein O (609 aa).

Disordered regions lie at residues 1-89 (MDGF…KNSS) and 181-263 (KSVR…SSCG). Thr-43 bears the Phosphothreonine; by PKB/AKT1 mark. The segment covering 62–79 (TKASNQQLASGDPQQAMQ) has biased composition (polar residues). Over residues 80–89 (NANAAKKNSS) the composition is skewed to low complexity. A DNA-binding region (fork-head) is located at residues 94-200 (WGNLSYADLI…ETSRYEKRRG (107 aa)). Residue Ser-189 is modified to Phosphoserine; by PKB/AKT1. Polar residues-rich tracts occupy residues 220–229 (ATPSPSSSVS) and 254–263 (RASSNASSCG). Residue Ser-257 is modified to Phosphoserine; by PKB/AKT1. A phosphoserine mark is found at Ser-260, Ser-261, and Ser-266. 2 disordered regions span residues 321 to 365 (AASG…QGQG) and 384 to 411 (RDGL…DSLN). Residues 327–339 (TQPPPPYQPPQQP) are compositionally biased toward pro residues. The span at 388-397 (SPNSVTTTMS) shows a compositional bias: polar residues.

In terms of assembly, interacts with melt.

The protein localises to the cytoplasm. The protein resides in the nucleus. Its function is as follows. Transcription factor involved in the regulation of the insulin signaling pathway. Consistently activates both the downstream target Thor\d4EBP and the feedback control target InR. Involved in negative regulation of the cell cycle, modulating cell growth and proliferation. In response to cellular stresses, such as nutrient deprivation or increased levels of reactive oxygen species, foxo is activated and inhibits growth through the action of target genes such as Thor. Foxo activated in the adult fat body can regulate lifespan in adults; an insulin peptide itself may function as one secondary messenger of insulin-regulated aging. Also regulates Lip4, homolog of human acid lipases, thereby acting as a key modulator of lipid metabolism by insulin signaling and integrates insulin responses to glucose and lipid homeostasis. The chain is Forkhead box protein O from Drosophila virilis (Fruit fly).